We begin with the raw amino-acid sequence, 602 residues long: tRNA uridine 5-carboxymethylaminomethyl modification enzyme MnmG (602 aa).

10 to 15 (GGGHAG) is a binding site for FAD. Positions 217–242 (DPQPRGFTGRPGPRAAESPTWQTHTT) are disordered. 267–281 (GPRYCPSIEDKVVRF) lines the NAD(+) pocket.

This sequence belongs to the MnmG family. Homodimer. Heterotetramer of two MnmE and two MnmG subunits. Requires FAD as cofactor.

The protein localises to the cytoplasm. In terms of biological role, NAD-binding protein involved in the addition of a carboxymethylaminomethyl (cmnm) group at the wobble position (U34) of certain tRNAs, forming tRNA-cmnm(5)s(2)U34. This Deinococcus geothermalis (strain DSM 11300 / CIP 105573 / AG-3a) protein is tRNA uridine 5-carboxymethylaminomethyl modification enzyme MnmG.